We begin with the raw amino-acid sequence, 392 residues long: Phosphoglycerate kinase (392 aa).

Residues 21-23 (DLN), Arg36, 59-62 (HLGR), Arg113, and Arg146 contribute to the substrate site. ATP-binding positions include Lys197, Glu319, and 345-348 (GGDT).

Belongs to the phosphoglycerate kinase family. Monomer.

It is found in the cytoplasm. It catalyses the reaction (2R)-3-phosphoglycerate + ATP = (2R)-3-phospho-glyceroyl phosphate + ADP. It functions in the pathway carbohydrate degradation; glycolysis; pyruvate from D-glyceraldehyde 3-phosphate: step 2/5. This chain is Phosphoglycerate kinase, found in Alkalilimnicola ehrlichii (strain ATCC BAA-1101 / DSM 17681 / MLHE-1).